A 123-amino-acid chain; its full sequence is VQ motif-containing protein 29 (123 aa).

The disordered stretch occupies residues 24–55 (TKNYLTSLHSTRKQPSKPLKRPAISSPLNPMH). Residues 33 to 43 (STRKQPSKPLK) are compositionally biased toward basic residues. Residues 66-75 (FKVLVQRLTG) carry the VQ motif. Positions 77 to 94 (PEHETVQAKPLKTSDDAA) are enriched in basic and acidic residues. Positions 77–123 (PEHETVQAKPLKTSDDAAKQSSSSFAFDPSSSWGDFSFQNPANISRW) are disordered. The segment covering 97–108 (SSSSFAFDPSSS) has biased composition (low complexity). The span at 109 to 123 (WGDFSFQNPANISRW) shows a compositional bias: polar residues.

The protein resides in the nucleus. Its function is as follows. May function as negative regulator of flowering transition. The polypeptide is VQ motif-containing protein 29 (Arabidopsis thaliana (Mouse-ear cress)).